The chain runs to 7760 residues: Malpinin synthetase (7760 aa).

Disordered stretches follow at residues 42–115 and 161–180; these read ENPE…VNEK and LDLP…GDRV. The segment covering 65-79 has biased composition (polar residues); sequence TPRSASPLSSYTGSP. The condensation 1 stretch occupies residues 87–389; sequence TELSRTLSGD…LSLDERTFLL (303 aa). Residues 164 to 180 show a composition bias toward basic and acidic residues; sequence PTDRPRPSHPSFEGDRV. The interval 409 to 813 is adenylation 1; the sequence is FEQQAERRPH…GRNDHQVKIR (405 aa). The 75-residue stretch at 926–1000 folds into the Carrier 1 domain; sequence PPQGELETAI…AFAHAIGQHR (75 aa). An O-(pantetheine 4'-phosphoryl)serine modification is found at serine 961. The segment at 1046 to 1477 is dual epimerase/condensation (E/C) domain 1; the sequence is QDIYALAPLQ…VLPADERKLL (432 aa). An adenylation 2 region spans residues 1498-1893; sequence FEQYADRVPN…GRTDYQVKIR (396 aa). A Carrier 2 domain is found at 2003–2077; it reads APEGEVENAI…ALAQSIGEHR (75 aa). Serine 2038 bears the O-(pantetheine 4'-phosphoryl)serine mark. Positions 2099-2558 are dual epimerase/condensation (E/C) domain 2; the sequence is PLIDLNQNDI…LPTEERQLLT (460 aa). The tract at residues 2578–2973 is adenylation 3; that stretch reads FEQHVDRAPD…GRADFQVKIR (396 aa). The region spanning 3083-3157 is the Carrier 3 domain; sequence APQGAVEAAI…ALAQSIGEHR (75 aa). Serine 3118 carries the post-translational modification O-(pantetheine 4'-phosphoryl)serine. The dual epimerase/condensation (E/C) domain 3 stretch occupies residues 3203–3634; that stretch reads QDIYALAPLQ…HLNVLPAEER (432 aa). The adenylation 4 stretch occupies residues 3658 to 4057; it reads FEQQAERTPD…GRNDDQIKIR (400 aa). Residues 4174–4248 enclose the Carrier 4 domain; it reads APQGEVETAL…AFASRVQEQL (75 aa). Serine 4209 is modified (O-(pantetheine 4'-phosphoryl)serine). The condensation 2 stretch occupies residues 4267 to 4705; sequence LPLSFAQQRL…AAEILSQDER (439 aa). Residues 4729-5133 are adenylation 5; sequence FEQRVESTPD…GRNDHQVKIR (405 aa). The Carrier 5 domain maps to 5250 to 5324; the sequence is APEGEVETAI…VFAASIGHHQ (75 aa). Serine 5285 carries the O-(pantetheine 4'-phosphoryl)serine modification. The dual dehydration/condensation (C*) domain stretch occupies residues 5370–5804; the sequence is QDIYSLSPLQ…VLPAEERTLL (435 aa). The interval 5825 to 6224 is adenylation 6; it reads FEQQSERTPE…GRNDDQVKIR (400 aa). A Carrier 6 domain is found at 6338-6412; that stretch reads APQGEVETAL…ALAQSIGQHH (75 aa). Serine 6373 is subject to O-(pantetheine 4'-phosphoryl)serine. The tract at residues 6458 to 6890 is dual epimerase/condensation (E/C) domain 4; the sequence is QDIYALSPLQ…QLDTVPAEEH (433 aa). The tract at residues 6914-7300 is adenylation 7; it reads FEHQVERTPA…KFLPDGNVVC (387 aa). Positions 7428–7503 constitute a Carrier 7 domain; it reads EPRGAIENIL…ELAPRLLATG (76 aa). Position 7463 is an O-(pantetheine 4'-phosphoryl)serine (serine 7463). A thioesterase (TE) domain region spans residues 7561 to 7722; sequence DNGNMASSLD…KPYVQGSIEV (162 aa).

Belongs to the NRP synthetase family.

Functionally, heptamodular nonribosomal peptide synthetase that catalyzes the biosynthesis of malpinins, natural products that show biosurfactant activities. Malpinins are acetylated hexapeptides (Ac-D-Leu/Val-D-Arg-D-Leu/Val-L-Phe/Leu-Dhb-D-Trp) containing a non-canonical amino acid derived from dehydration of L-Trp, (Z)-dehydrobutyrine (Dhb), at position 5, as well as a C-terminal D-amino acid, D-tryptophan, that can be oxidized to kynurenine. Incorporated D-amino acids in positions 1, 3 and 4 are variable resulting in the malpinin A-congeners malpinin B to E. Both modules M1 and M3 have relaxed specificity towards aliphatic amino acids (L-Leu &gt; L-Met &gt; L/D-Val &gt; L-Cys), explaining Val at position 1 and 3 in malpinin A-congeners malpinin B to D. The incorporation of L-Leu, but not N-acetyl-L-Leu by module 1 suggests the N-terminal acetylation occurs at a later stage of biosynthesis. Similar to M1 and M3, M4 has a broad substrate spectrum showing the highest activity with L-Phe followed by other hydrophobic amino acids (L-Phe &gt; L-Met = L-Trp). In contrast, M2, M5 and M6 are highly specific for L-Arg, L-Thr, and L-Trp, respectively. Solely, M7 converted its preferred substrate (L-Phe) with a 15 000-fold reduced turnover rate compared to the most active module M6, indicating that its A domain cannot contribute to the malpinin biosynthesis due to low activity. Since the last T domain in malA is apparently not loaded with an amino acid, either the TE domain must offload the oligopeptide from the preceding T domain or the dual E/C domain of M7 must transfer the final peptide chain to the free acceptor T domain of M7 prior to release. The sequence is that of Malpinin synthetase from Mortierella alpina (Oleaginous fungus).